We begin with the raw amino-acid sequence, 43 residues long: Cytochrome b559 subunit beta (43 aa).

The chain crosses the membrane as a helical span at residues 18–34 (WLAVHGLAIPTVFFLGG). H22 lines the heme pocket.

It belongs to the PsbE/PsbF family. As to quaternary structure, heterodimer of an alpha subunit and a beta subunit. PSII is composed of 1 copy each of membrane proteins PsbA, PsbB, PsbC, PsbD, PsbE, PsbF, PsbH, PsbI, PsbJ, PsbK, PsbL, PsbM, PsbT, PsbX, PsbY, PsbZ, Psb30/Ycf12, at least 3 peripheral proteins of the oxygen-evolving complex and a large number of cofactors. It forms dimeric complexes. The cofactor is heme b.

It is found in the plastid. Its subcellular location is the chloroplast thylakoid membrane. In terms of biological role, this b-type cytochrome is tightly associated with the reaction center of photosystem II (PSII). PSII is a light-driven water:plastoquinone oxidoreductase that uses light energy to abstract electrons from H(2)O, generating O(2) and a proton gradient subsequently used for ATP formation. It consists of a core antenna complex that captures photons, and an electron transfer chain that converts photonic excitation into a charge separation. The chain is Cytochrome b559 subunit beta from Thalassiosira pseudonana (Marine diatom).